We begin with the raw amino-acid sequence, 669 residues long: Probable L-type lectin-domain containing receptor kinase I.2 (669 aa).

Positions 1–24 (MAQRFYLLLLLLIFLVNLICFSSQ) are cleaved as a signal peptide. The Extracellular segment spans residues 25–295 (QDLSFVFNGF…FTEQKRKRSP (271 aa)). Residues 26-266 (DLSFVFNGFN…NQYILGWSFS (241 aa)) form a legume-lectin like region. 4 N-linked (GlcNAc...) asparagine glycosylation sites follow: Asn-132, Asn-189, Asn-212, and Asn-233. Residues 296-316 (LLIVLLVILTLVVIGGLGGYY) form a helical membrane-spanning segment. The Cytoplasmic segment spans residues 317–669 (LYRRKKYAEV…SHTILNGDGR (353 aa)). The Protein kinase domain maps to 351-609 (FNKDGRLGKG…MQYINRDQAL (259 aa)). ATP contacts are provided by residues 357–365 (LGKGGFGEV) and Lys-379. The active-site Proton acceptor is Asp-475.

This sequence in the C-terminal section; belongs to the protein kinase superfamily. Ser/Thr protein kinase family. In the N-terminal section; belongs to the leguminous lectin family.

The protein resides in the cell membrane. The enzyme catalyses L-seryl-[protein] + ATP = O-phospho-L-seryl-[protein] + ADP + H(+). It carries out the reaction L-threonyl-[protein] + ATP = O-phospho-L-threonyl-[protein] + ADP + H(+). Involved in resistance response to the pathogenic fungus Alternaria brassicicola. This is Probable L-type lectin-domain containing receptor kinase I.2 from Arabidopsis thaliana (Mouse-ear cress).